The primary structure comprises 481 residues: Two-component response regulator ORR32 (481 aa).

The Response regulatory domain occupies 13 to 138 (HVMLVDDDTK…TIALWRVVAW (126 aa)). 4-aspartylphosphate is present on D66.

The protein belongs to the ARR family. Type-B subfamily. In terms of processing, two-component system major event consists of a His-to-Asp phosphorelay between a sensor histidine kinase (HK) and a response regulator (RR). In plants, the His-to-Asp phosphorelay involves an additional intermediate named Histidine-containing phosphotransfer protein (HPt). This multistep phosphorelay consists of a His-Asp-His-Asp sequential transfer of a phosphate group between first a His and an Asp of the HK protein, followed by the transfer to a conserved His of the HPt protein and finally the transfer to an Asp in the receiver domain of the RR protein.

Functions as a response regulator involved in His-to-Asp phosphorelay signal transduction system. Phosphorylation of the Asp residue in the receiver domain activates the ability of the protein to promote the transcription of target genes. May directly activate some type-A response regulators in response to cytokinins. This is Two-component response regulator ORR32 from Oryza sativa subsp. japonica (Rice).